The chain runs to 444 residues: Spermidine/putrescine import ATP-binding protein PotA (444 aa).

The ABC transporter domain occupies 11–332 (ISLVDVDKEF…PVNKWVANFI (322 aa)). 43 to 50 (GPSGSGKT) lines the ATP pocket. Residues 111-201 (RIKKKAEEIP…ESFKKKYLTR (91 aa)) form an insert region.

This sequence belongs to the ABC transporter superfamily. Spermidine/putrescine importer (TC 3.A.1.11.1) family. In terms of assembly, the complex is composed of two ATP-binding proteins (PotA), two transmembrane proteins (PotB and PotC) and a solute-binding protein (PotD).

The protein resides in the cell membrane. It catalyses the reaction ATP + H2O + polyamine-[polyamine-binding protein]Side 1 = ADP + phosphate + polyamineSide 2 + [polyamine-binding protein]Side 1.. Functionally, part of the ABC transporter complex PotABCD involved in spermidine/putrescine import. Responsible for energy coupling to the transport system. In Mesomycoplasma hyopneumoniae (strain J / ATCC 25934 / NCTC 10110) (Mycoplasma hyopneumoniae), this protein is Spermidine/putrescine import ATP-binding protein PotA.